Here is a 55-residue protein sequence, read N- to C-terminus: Histone H1 (55 aa).

Low complexity predominate over residues Met-1–Lys-15. Positions Met-1–Ala-28 are disordered. Ala-2 is modified (N-acetylalanine). Over residues Ala-16–Lys-27 the composition is skewed to basic residues. An H15 domain is found at Ala-28–Lys-55.

Belongs to the histone H1/H5 family.

It is found in the nucleus. The protein resides in the chromosome. The protein localises to the secreted. In terms of biological role, histones H1 are necessary for the condensation of nucleosome chains into higher-order structures. SAMP H1 has antibacterial activity against Gram-negative bacteria E.coli, A.salmonicida subsp salmonicida, V.anguillarum and S.typhimurium and Gram-positive bacteria B.subtilis and L.ivanovii. The sequence is that of Histone H1 from Salmo salar (Atlantic salmon).